Here is a 486-residue protein sequence, read N- to C-terminus: Putative ankyrin repeat protein R634 (486 aa).

ANK repeat units follow at residues 84–113 (DLFKYVIEFCISGKLDSIKRLVSMGANVRE), 114–143 (HNDVALNRAVENGHMDIFEYLISKGADLYA), 145–173 (KNTLVRCASYGGNLDMVKYLISIGANFRE), 174–203 (NCDTPLIWACHNGHLEIVKYLVDQGADVNS), 205–233 (SHKSIITASKMGHLGIVKYLVSKTTNIDW), 234–263 (RHNYAAAFAAQNNHLEIVKYLVNEGANLEI), 265–293 (DGCIIRVAAKNGHLDIVKYLVSLGMEIGF), 307–336 (NKITPVIGSAVEGGHLSMVKYFVSIGATIK), 337–366 (EKNYAFVKAAEYGHLEIIKYLVSQGISLEK), 367–396 (KINKALIVACSKGHLEIVKYLVENGANVKT), 398–426 (EGLPLRQACWGNYLDIAKYLVSNGADVTS), and 427–456 (YDNYALKTALEKGDLETVKYFIYVGANVND).

The sequence is that of Putative ankyrin repeat protein R634 from Acanthamoeba polyphaga (Amoeba).